The primary structure comprises 305 residues: tRNA pseudouridine synthase B (305 aa).

The Nucleophile role is filled by aspartate 48.

Belongs to the pseudouridine synthase TruB family. Type 1 subfamily.

The enzyme catalyses uridine(55) in tRNA = pseudouridine(55) in tRNA. Responsible for synthesis of pseudouridine from uracil-55 in the psi GC loop of transfer RNAs. This chain is tRNA pseudouridine synthase B, found in Pseudomonas fluorescens (strain ATCC BAA-477 / NRRL B-23932 / Pf-5).